We begin with the raw amino-acid sequence, 404 residues long: O-methyltransferase GME11366 (404 aa).

S-adenosyl-L-methionine is bound by residues 237 to 238, Asp-262, Arg-301, and Arg-302; that span reads GG. His-305 acts as the Proton acceptor in catalysis.

The protein belongs to the class I-like SAM-binding methyltransferase superfamily. Cation-independent O-methyltransferase family.

It participates in secondary metabolite biosynthesis. Functionally, O-methyltransferase; part of the gene cluster that mediates the biosynthesis of dibenzodioxocinones such as pestalotiollide B, a novel class of inhibitors against cholesterol ester transfer protein (CEPT). The biosynthesis initiates from condensation of acetate and malonate units catalyzed by the non-reducing PKS pks8/GME11356. Pks8/GME11356 lacks a thioesterase (TE) domain, which is important to the cyclizing of the third ring of atrochrysone carboxylic acid, and the esterase GME11355 might play the role of TE and catalyzes the cyclization reaction of the C ring. The lactamase-like protein GME11357 (or other beta-lactamases in Pestalotiopsis microspora) probably hydrolyzes the thioester bond between the ACP of pks8/GME11356 and the intermediate to release atrochrysone carboxylic acid, which is spontaneously dehydrates to form endocrocin anthrone. Endocrocin anthrone is further converted to emodin via the endocrocin intermediate. Emodin is then oxidized by several enzymes such as the Baeyer-Villiger oxidase GME11358, the oxidoreductase GME11367, the short chain dehydrogenase/reductase GME11373, as well as by other oxidoreductases from the cluster, to modify the A and C rings and open the B ring, and finally yield monodictyphenone. The prenyltransferase GME11375 may catalyze the addition reaction between the C5 side chains and the carbon bone of dibenzodioxocinones. The remaining biochemical reactions to the final product dibenzodioxocinones should be methylation catalyzed by methyltransferase GME11366 and reduction and lactonization reaction catalyzed by a series of oxidordeuctases. The protein is O-methyltransferase GME11366 of Pestalotiopsis microspora.